Reading from the N-terminus, the 112-residue chain is MPYQAESMTSQPQMTVTSYTVSHWSSDVCDCCDDCGIRLCGAFIPCILGCKVAQDNGDSCCLPFLPGAMVALRTSIRDRYHINGSVCDDWVIMTCCSFCGLCQLAREQKARG.

It belongs to the cornifelin family.

This is Cornifelin homolog (cnfn) from Danio rerio (Zebrafish).